Reading from the N-terminus, the 142-residue chain is Large ribosomal subunit protein uL13 (142 aa).

It belongs to the universal ribosomal protein uL13 family. Part of the 50S ribosomal subunit.

This protein is one of the early assembly proteins of the 50S ribosomal subunit, although it is not seen to bind rRNA by itself. It is important during the early stages of 50S assembly. The chain is Large ribosomal subunit protein uL13 from Treponema denticola (strain ATCC 35405 / DSM 14222 / CIP 103919 / JCM 8153 / KCTC 15104).